The sequence spans 572 residues: Solute carrier family 22 member 16 (572 aa).

Residues 21–41 (IFLYFICAFQNISCGIHYLAS) traverse the membrane as a helical segment. N-linked (GlcNAc...) asparagine glycosylation occurs at asparagine 57. Helical transmembrane passes span 156–176 (LIQP…GYLS), 183–203 (LVLW…AFTF), 208–228 (FIVA…VVFV), 244–264 (IHLH…GYFV), and 268–288 (WIYQ…CWML). Asparagine 315 carries an N-linked (GlcNAc...) asparagine glycan. The next 6 membrane-spanning stretches (helical) occupy residues 359–379 (TLIL…FSLN), 389–409 (LNLF…CLGM), 416–436 (NILI…MVIP), 441–461 (VWLV…FGLI), 476–496 (LAVG…PLCI), and 503–523 (IFMP…LTFL). N-linked (GlcNAc...) asparagine glycosylation is present at asparagine 559.

Belongs to the major facilitator (TC 2.A.1) superfamily. Organic cation transporter (TC 2.A.1.19) family.

The protein resides in the cell membrane. The catalysed reaction is (R)-carnitine(in) = (R)-carnitine(out). It carries out the reaction spermidine(in) = spermidine(out). Its function is as follows. Facilitative organic cation transporter that mediates the transport of carnitine as well as the polyamine spermidine. Mediates the partially Na(+)-dependent bidirectional transport of carnitine. May mediate L-carnitine secretion from testis epididymal epithelium into the lumen which is involved in the maturation of spermatozoa. In Bos taurus (Bovine), this protein is Solute carrier family 22 member 16 (SLC22A16).